A 150-amino-acid chain; its full sequence is Transcription antitermination protein NusB (150 aa).

The protein belongs to the NusB family.

In terms of biological role, involved in transcription antitermination. Required for transcription of ribosomal RNA (rRNA) genes. Binds specifically to the boxA antiterminator sequence of the ribosomal RNA (rrn) operons. This Chloroflexus aggregans (strain MD-66 / DSM 9485) protein is Transcription antitermination protein NusB.